The following is a 595-amino-acid chain: Potassium-transporting ATPase potassium-binding subunit (595 aa).

Transmembrane regions (helical) follow at residues 9-29 (ICGY…YMAA), 63-83 (TGYA…VYAL), 135-155 (GLTV…VALI), 177-197 (ILHI…GQGV), 285-305 (FLEM…FGVM), 312-332 (GWVI…VTVL), 412-432 (GLYG…LMIG), 451-471 (AIVI…AVML), 516-536 (LMLG…VLAI), and 560-580 (FVGL…IPAL).

The protein belongs to the KdpA family. In terms of assembly, the system is composed of three essential subunits: KdpA, KdpB and KdpC.

The protein resides in the cell inner membrane. In terms of biological role, part of the high-affinity ATP-driven potassium transport (or Kdp) system, which catalyzes the hydrolysis of ATP coupled with the electrogenic transport of potassium into the cytoplasm. This subunit binds the periplasmic potassium ions and delivers the ions to the membrane domain of KdpB through an intramembrane tunnel. This chain is Potassium-transporting ATPase potassium-binding subunit, found in Methylococcus capsulatus (strain ATCC 33009 / NCIMB 11132 / Bath).